We begin with the raw amino-acid sequence, 321 residues long: Probable arabinan endo-1,5-alpha-L-arabinosidase A (321 aa).

The first 19 residues, 1–19, serve as a signal peptide directing secretion; it reads MSASAFVAVASCLAALVHG. Asp34 serves as the catalytic Proton acceptor. Glu200 acts as the Proton donor in catalysis.

The protein belongs to the glycosyl hydrolase 43 family.

The protein resides in the secreted. The enzyme catalyses Endohydrolysis of (1-&gt;5)-alpha-arabinofuranosidic linkages in (1-&gt;5)-arabinans.. It participates in glycan metabolism; L-arabinan degradation. In terms of biological role, endo-1,5-alpha-L-arabinanase involved in degradation of pectin. Its preferred substrate is linear 1,5-alpha-L-arabinan. This chain is Probable arabinan endo-1,5-alpha-L-arabinosidase A (abnA), found in Neosartorya fischeri (strain ATCC 1020 / DSM 3700 / CBS 544.65 / FGSC A1164 / JCM 1740 / NRRL 181 / WB 181) (Aspergillus fischerianus).